Reading from the N-terminus, the 803-residue chain is Bromodomain-containing protein 2 (803 aa).

Methionine 1 carries the post-translational modification N-acetylmethionine. Threonine 6 is subject to Phosphothreonine. A Phosphoserine modification is found at serine 37. The disordered stretch occupies residues 53-73; the sequence is ALQLTPANPPPPEVSNPKKPG. The Bromo 1 domain maps to 74-180; the sequence is RVTNQLQYLH…KIFLQKVASM (107 aa). 6 residues coordinate a protein: aspartate 112, tyrosine 155, asparagine 156, lysine 157, aspartate 160, and aspartate 161. 3 disordered regions span residues 268 to 348, 456 to 652, and 739 to 803; these read PPAQ…KLSE, EPLE…KRQL, and EKRL…SDSG. Residues 285 to 298 show a composition bias toward low complexity; the sequence is TTTPTPTAILAPGS. 2 positions are modified to phosphoserine: serine 298 and serine 301. Over residues 316 to 332 the composition is skewed to basic and acidic residues; that stretch reads VRRESGRPIKPPRKDLP. Residues 344–453 enclose the Bromo 2 domain; that stretch reads GKLSEQLKHC…DVFEFRYAKM (110 aa). Positions 481-515 are enriched in acidic residues; sequence SSEESSSESSSEEEEEEDEDEEEEEEESESSDSEE. Over residues 545-567 the composition is skewed to basic residues; sequence KPKRKREKKEKKKKRKAEKHRGR. The Nuclear localization signal signature appears at 556-560; the sequence is KKKRK. Residues 623–632 show a composition bias toward low complexity; it reads KTAPPALPAG. In terms of domain architecture, NET spans 634 to 716; that stretch reads DSEEEEESRP…SCLRKKPRKP (83 aa). Serine 635 bears the Phosphoserine mark. Over residues 641–652 the composition is skewed to basic and acidic residues; the sequence is SRPMSYDEKRQL. Over residues 777–797 the composition is skewed to low complexity; it reads SASSSSSDSSSSSSSSSSSDT.

This sequence belongs to the BET family. Homodimer. Interacts with E2F1. Interacts with (acetylated) STAT3; promoting STAT3 recruitment to chromatin. Interacts with CTCF; promoting BRD2 recruitment to chromatin.

It is found in the nucleus. It localises to the chromosome. Its function is as follows. Chromatin reader protein that specifically recognizes and binds histone H4 acetylated at 'Lys-5' and 'Lys-12' (H4K5ac and H4K12ac, respectively), thereby controlling gene expression and remodeling chromatin structures. Recruits transcription factors and coactivators to target gene sites, and activates RNA polymerase II machinery for transcriptional elongation. Plays a key role in genome compartmentalization via its association with CTCF and cohesin: recruited to chromatin by CTCF and promotes formation of topologically associating domains (TADs) via its ability to bind acetylated histones, contributing to CTCF boundary formation and enhancer insulation. Also recognizes and binds acetylated non-histone proteins, such as STAT3. Involved in inflammatory response by regulating differentiation of naive CD4(+) T-cells into T-helper Th17: recognizes and binds STAT3 acetylated at 'Lys-87', promoting STAT3 recruitment to chromatin. In addition to acetylated lysines, also recognizes and binds lysine residues on histones that are both methylated and acetylated on the same side chain to form N6-acetyl-N6-methyllysine (Kacme), an epigenetic mark of active chromatin associated with increased transcriptional initiation. Specifically binds histone H4 acetyl-methylated at 'Lys-5' and 'Lys-12' (H4K5acme and H4K12acme, respectively). This is Bromodomain-containing protein 2 (BRD2) from Bos taurus (Bovine).